The following is a 680-amino-acid chain: DNA-directed RNA polymerase subunit beta' (680 aa).

Zn(2+) is bound by residues cysteine 69, cysteine 71, cysteine 87, and cysteine 90. 3 residues coordinate Mg(2+): aspartate 489, aspartate 491, and aspartate 493.

It belongs to the RNA polymerase beta' chain family. RpoC1 subfamily. In plastids the minimal PEP RNA polymerase catalytic core is composed of four subunits: alpha, beta, beta', and beta''. When a (nuclear-encoded) sigma factor is associated with the core the holoenzyme is formed, which can initiate transcription. Mg(2+) serves as cofactor. The cofactor is Zn(2+).

Its subcellular location is the plastid. It localises to the chloroplast. The enzyme catalyses RNA(n) + a ribonucleoside 5'-triphosphate = RNA(n+1) + diphosphate. In terms of biological role, DNA-dependent RNA polymerase catalyzes the transcription of DNA into RNA using the four ribonucleoside triphosphates as substrates. This chain is DNA-directed RNA polymerase subunit beta', found in Nandina domestica (Heavenly bamboo).